The primary structure comprises 347 residues: Protease HtpX homolog (347 aa).

3 consecutive transmembrane segments (helical) span residues 8–28, 46–66, and 76–96; these read IAFG…VVIA, ALTA…IAIV, and WGFI…TYIA. Residue His174 coordinates Zn(2+). The active site involves Glu175. His178 contributes to the Zn(2+) binding site. The next 2 membrane-spanning stretches (helical) occupy residues 185–205 and 221–241; these read ALML…VSSV and LLAA…LLVL. Glu248 serves as a coordination point for Zn(2+).

This sequence belongs to the peptidase M48B family. Zn(2+) is required as a cofactor.

The protein localises to the cell membrane. The polypeptide is Protease HtpX homolog (Pyrobaculum islandicum (strain DSM 4184 / JCM 9189 / GEO3)).